Here is a 135-residue protein sequence, read N- to C-terminus: Large ribosomal subunit protein uL18 (135 aa).

Positions 1–23 (MSQTANQKAKRIPLGKDASTKRR) are disordered.

The protein belongs to the universal ribosomal protein uL18 family. As to quaternary structure, part of the 50S ribosomal subunit; part of the 5S rRNA/L5/L18/L25 subcomplex. Contacts the 5S and 23S rRNAs.

In terms of biological role, this is one of the proteins that bind and probably mediate the attachment of the 5S RNA into the large ribosomal subunit, where it forms part of the central protuberance. The sequence is that of Large ribosomal subunit protein uL18 from Rhodococcus jostii (strain RHA1).